A 168-amino-acid chain; its full sequence is CASP-like protein 1U1 (168 aa).

Over 1 to 6 (MDGAAR) the chain is Cytoplasmic. The helical transmembrane segment at 7–27 (AVSLFFRIAVVGLSVAAAVVM) threads the bilayer. At 28–49 (ATASQAFPFNYGGAVSYTKYPA) the chain is on the extracellular side. The helical transmembrane segment at 50–70 (FVYFVVAAVVSAVCSAAALYL) threads the bilayer. The Cytoplasmic portion of the chain corresponds to 71–80 (SVVREAAAGW). The chain crosses the membrane as a helical span at residues 81–101 (AVALLDVVTMGLLFSAAGAVF). Topologically, residues 102 to 138 (AVRRMAPLYLGVAGADTVAGRWVNGEFCHAAGAFCWR) are extracellular. The chain crosses the membrane as a helical span at residues 139–159 (VTTSAIICAFAAAAVSVAVLT). Residues 160–168 (KGARHRGKH) lie on the Cytoplasmic side of the membrane.

The protein belongs to the Casparian strip membrane proteins (CASP) family. Homodimer and heterodimers.

The protein resides in the cell membrane. The polypeptide is CASP-like protein 1U1 (Oryza sativa subsp. japonica (Rice)).